The sequence spans 393 residues: tRNA-specific 2-thiouridylase MnmA (393 aa).

Residues 19–26 (AMSGGVDS) and leucine 45 each bind ATP. The Nucleophile role is filled by cysteine 113. A disulfide bridge connects residues cysteine 113 and cysteine 210. Glycine 137 provides a ligand contact to ATP. The interval 160–162 (RDQ) is interaction with tRNA. The Cysteine persulfide intermediate role is filled by cysteine 210.

Belongs to the MnmA/TRMU family.

It localises to the cytoplasm. The catalysed reaction is S-sulfanyl-L-cysteinyl-[protein] + uridine(34) in tRNA + AH2 + ATP = 2-thiouridine(34) in tRNA + L-cysteinyl-[protein] + A + AMP + diphosphate + H(+). Functionally, catalyzes the 2-thiolation of uridine at the wobble position (U34) of tRNA, leading to the formation of s(2)U34. The polypeptide is tRNA-specific 2-thiouridylase MnmA (Afipia carboxidovorans (strain ATCC 49405 / DSM 1227 / KCTC 32145 / OM5) (Oligotropha carboxidovorans)).